The sequence spans 189 residues: GTPase NRas (189 aa).

GTP is bound by residues 10–18 and 29–30; these read GAGGVGKSA and VD. Residues 32 to 40 carry the Effector region motif; it reads YDPTIEDSY. Position 57–61 (57–61) interacts with GTP; it reads DTAGQ. At Ser-89 the chain carries Phosphoserine. Residue 116-119 coordinates GTP; it reads NKCD. The interval 166 to 185 is hypervariable region; sequence YRMKKLNSSDDGTQGCLGLS. Residue Lys-170 forms a Glycyl lysine isopeptide (Lys-Gly) (interchain with G-Cter in ubiquitin) linkage. Cys-181 is lipidated: S-palmitoyl cysteine. The S-farnesyl cysteine moiety is linked to residue Cys-186. Positions 187–189 are cleaved as a propeptide — removed in mature form; the sequence is AVM.

It belongs to the small GTPase superfamily. Ras family. In terms of assembly, interacts (active GTP-bound form preferentially) with RGS14. Interacts (active GTP-bound form) with RASSF7. Interacts (active GTP-bound form) with both SHOC2 and PP1c (all isoforms) to form a tertiary complex; SHOC2 and PP1c preferably bind M-Ras/MRAS, but they also bind K-Ras/KRAS, N-Ras/NRAS and H-Ras/HRAS. In terms of processing, palmitoylated by the ZDHHC9-GOLGA7 complex. Depalmitoylated by ABHD17A, ABHD17B and ABHD17C. A continuous cycle of de- and re-palmitoylation regulates rapid exchange between plasma membrane and Golgi. Post-translationally, acetylation at Lys-104 prevents interaction with guanine nucleotide exchange factors (GEFs). Ubiquitinated by the BCR(LZTR1) E3 ubiquitin ligase complex at Lys-170 in a non-degradative manner, leading to inhibit Ras signaling by decreasing Ras association with membranes. In terms of processing, phosphorylation at Ser-89 enhances NRAS association with its downstream effectors.

It is found in the cell membrane. Its subcellular location is the golgi apparatus membrane. The enzyme catalyses GTP + H2O = GDP + phosphate + H(+). Its activity is regulated as follows. Alternates between an inactive form bound to GDP and an active form bound to GTP. Activated by a guanine nucleotide-exchange factor (GEF) and inactivated by a GTPase-activating protein (GAP). Its function is as follows. Ras proteins bind GDP/GTP and possess intrinsic GTPase activity. In Monodelphis domestica (Gray short-tailed opossum), this protein is GTPase NRas (NRAS).